The chain runs to 218 residues: Thiopurine S-methyltransferase (218 aa).

S-adenosyl-L-methionine-binding residues include Trp-10, Leu-45, Glu-66, and Arg-123.

Belongs to the class I-like SAM-binding methyltransferase superfamily. TPMT family.

Its subcellular location is the cytoplasm. The enzyme catalyses S-adenosyl-L-methionine + a thiopurine = S-adenosyl-L-homocysteine + a thiopurine S-methylether.. The sequence is that of Thiopurine S-methyltransferase from Azotobacter vinelandii (strain DJ / ATCC BAA-1303).